Consider the following 173-residue polypeptide: MQFPMGPACIFLRKGIAEKQRERPLGPDEIEELREAFLEFDKDRDGFISCKDLGNLMRTMGYMPTEMELIELGQQIRMNLGGRVDFDDFVELMTPKLLAETAGMIGVQEMRDAFKEFDANGDGEITLGELQQAMQRLLGDKLTSQEISEVVQEADINGDGTVDFEEFVKMMSR.

4 consecutive EF-hand domains span residues aspartate 28–methionine 63, glycine 82–alanine 99, isoleucine 105–aspartate 140, and leucine 142–arginine 173. Aspartate 41, aspartate 43, aspartate 45, and aspartate 52 together coordinate Ca(2+). The Ca(2+) site is built by aspartate 118, asparagine 120, aspartate 122, glutamate 124, glutamate 129, aspartate 155, asparagine 157, aspartate 159, threonine 161, and glutamate 166.

Interacts with CACNA1C (via C-terminal CDB motif) in a calcium-dependent manner. Interacts with STXBP1. Interacts with MYO6. In terms of tissue distribution, expressed in the retina (at protein level).

It localises to the cytoplasm. In terms of biological role, inhibits calcium-dependent inactivation of L-type calcium channel and shifts voltage dependence of activation to more depolarized membrane potentials. Involved in the transmission of light signals. May positively regulate neurotransmitter vesicle endocytosis and exocytosis in a salt-dependent manner. May play a role in the extension and network organization of neurites. This chain is Calcium-binding protein 5 (CABP5), found in Bos taurus (Bovine).